The sequence spans 149 residues: Ribonuclease H (149 aa).

Residues 1-141 (MKTVTLFSDG…CDTMAREKAT (141 aa)) enclose the RNase H type-1 domain. Mg(2+) contacts are provided by D9, E47, D69, and D133.

It belongs to the RNase H family. In terms of assembly, monomer. Requires Mg(2+) as cofactor.

The protein resides in the cytoplasm. It catalyses the reaction Endonucleolytic cleavage to 5'-phosphomonoester.. Endonuclease that specifically degrades the RNA of RNA-DNA hybrids. This chain is Ribonuclease H, found in Campylobacter curvus (strain 525.92).